A 191-amino-acid chain; its full sequence is Putative inactive glutathione hydrolase 4 (191 aa).

The active-site Nucleophile is threonine 54. Residues threonine 72, asparagine 74, glutamate 93, aspartate 96, 126–127, and 147–148 each bind L-glutamate; these read SS and GG.

Belongs to the gamma-glutamyltransferase family. As to expression, expressed at low levels in embryo, roots and leaves. In mature plants, expression is restricted to vascular tissues of roots, leaves, flowers and siliques.

The chain is Putative inactive glutathione hydrolase 4 (GGT4) from Arabidopsis thaliana (Mouse-ear cress).